We begin with the raw amino-acid sequence, 1122 residues long: Protein phosphatase 1 regulatory subunit 3A (1122 aa).

Positions 32 to 58 (TFQPGFSPQPSRRGSDSSEDIYLDTPS) are disordered. A phosphoserine; by GSK3 mark is found at Ser-38 and Ser-42. The residue at position 46 (Ser-46) is a Phosphoserine; by PKA and ISPK. Residue Ser-49 is modified to Phosphoserine. A Phosphothreonine modification is found at Thr-56. Residues 62–65 (RRVS) carry the PP1-binding motif motif. Ser-65 carries the phosphoserine; by PKA modification. One can recognise a CBM21 domain in the interval 122–230 (QLQIQKAILE…NNNGTNYTFI (109 aa)). 4 disordered regions span residues 332–351 (STAS…NFPN), 395–422 (SSGD…LGDT), 496–516 (CLKE…NGKD), and 640–668 (GINS…SREN). 2 stretches are compositionally biased toward basic and acidic residues: residues 395–405 (SSGDDCTHQPS) and 499–516 (ESTE…NGKD). The segment covering 640 to 662 (GINSEDQDNSPQHKQSWNVLESQ) has biased composition (polar residues). Ser-844 carries the post-translational modification Phosphoserine. Residues 963-977 (IEKHPYPESKPEEVS) show a composition bias toward basic and acidic residues. Disordered regions lie at residues 963–983 (IEKH…SGIV) and 1025–1058 (RHEN…PVEE). Polar residues-rich tracts occupy residues 1031–1040 (LVSSGQSLYT) and 1048–1058 (SSASTSLPVEE). A helical membrane pass occupies residues 1078–1098 (YFLLFLIFLITVYHYDLMIGL).

As to quaternary structure, interacts with PPP1CC catalytic subunit of PP1, and associates with glycogen. Post-translationally, phosphorylation at Ser-46 by ISPK stimulates the dephosphorylation of glycogen synthase and phosphorylase kinase. As to expression, skeletal muscle and heart.

It is found in the membrane. Its function is as follows. Seems to act as a glycogen-targeting subunit for PP1. PP1 is essential for cell division, and participates in the regulation of glycogen metabolism, muscle contractility and protein synthesis. Plays an important role in glycogen synthesis but is not essential for insulin activation of glycogen synthase. This is Protein phosphatase 1 regulatory subunit 3A (PPP1R3A) from Homo sapiens (Human).